Here is a 121-residue protein sequence, read N- to C-terminus: Ribosome-binding factor A (121 aa).

It belongs to the RbfA family. In terms of assembly, monomer. Binds 30S ribosomal subunits, but not 50S ribosomal subunits or 70S ribosomes.

It is found in the cytoplasm. Its function is as follows. One of several proteins that assist in the late maturation steps of the functional core of the 30S ribosomal subunit. Associates with free 30S ribosomal subunits (but not with 30S subunits that are part of 70S ribosomes or polysomes). Required for efficient processing of 16S rRNA. May interact with the 5'-terminal helix region of 16S rRNA. The protein is Ribosome-binding factor A of Agathobacter rectalis (strain ATCC 33656 / DSM 3377 / JCM 17463 / KCTC 5835 / VPI 0990) (Eubacterium rectale).